We begin with the raw amino-acid sequence, 310 residues long: Homoserine kinase (310 aa).

91–101 (PIGSGLGSSAC) contacts ATP.

This sequence belongs to the GHMP kinase family. Homoserine kinase subfamily.

The protein resides in the cytoplasm. The enzyme catalyses L-homoserine + ATP = O-phospho-L-homoserine + ADP + H(+). Its pathway is amino-acid biosynthesis; L-threonine biosynthesis; L-threonine from L-aspartate: step 4/5. In terms of biological role, catalyzes the ATP-dependent phosphorylation of L-homoserine to L-homoserine phosphate. The protein is Homoserine kinase of Escherichia coli O157:H7.